Reading from the N-terminus, the 179-residue chain is Peptide deformylase (179 aa).

Fe cation-binding residues include C102 and H144. E145 is an active-site residue. H148 provides a ligand contact to Fe cation.

The protein belongs to the polypeptide deformylase family. Fe(2+) serves as cofactor.

The enzyme catalyses N-terminal N-formyl-L-methionyl-[peptide] + H2O = N-terminal L-methionyl-[peptide] + formate. Functionally, removes the formyl group from the N-terminal Met of newly synthesized proteins. Requires at least a dipeptide for an efficient rate of reaction. N-terminal L-methionine is a prerequisite for activity but the enzyme has broad specificity at other positions. The polypeptide is Peptide deformylase (Wolbachia sp. subsp. Drosophila simulans (strain wRi)).